The chain runs to 203 residues: Small ribosomal subunit protein uS4 (203 aa).

Residues 93-173 (RRLDNVVFRS…FPSWIQVDKA (81 aa)) enclose the S4 RNA-binding domain.

Belongs to the universal ribosomal protein uS4 family. In terms of assembly, part of the 30S ribosomal subunit. Contacts protein S5. The interaction surface between S4 and S5 is involved in control of translational fidelity.

In terms of biological role, one of the primary rRNA binding proteins, it binds directly to 16S rRNA where it nucleates assembly of the body of the 30S subunit. With S5 and S12 plays an important role in translational accuracy. The protein is Small ribosomal subunit protein uS4 of Chlorobium limicola (strain DSM 245 / NBRC 103803 / 6330).